The sequence spans 293 residues: Phospholipid scramblase 2 (293 aa).

Positions Met-1–Gly-39 are disordered. Residues Met-1 to Pro-66 form a proline-rich domain (PRD) region. Residues Met-1–Lys-270 are Cytoplasmic-facing. Position 143 is a phosphothreonine; by PKC (Thr-143). 4 S-palmitoyl cysteine lipidation sites follow: Cys-166, Cys-167, Cys-170, and Cys-171. A helical membrane pass occupies residues Met-271–Phe-287. The Extracellular portion of the chain corresponds to Glu-288–Glu-293.

Belongs to the phospholipid scramblase family. Requires Ca(2+) as cofactor.

Its subcellular location is the membrane. The catalysed reaction is a 1,2-diacyl-sn-glycero-3-phosphocholine(in) = a 1,2-diacyl-sn-glycero-3-phosphocholine(out). Functionally, may catalyze calcium-induced ATP-independent rapid bidirectional and non-specific movement of phospholipids (lipid scrambling or lipid flip-flop) between the inner and outer leaflet of the plasma membrane. The chain is Phospholipid scramblase 2 from Bos taurus (Bovine).